A 584-amino-acid chain; its full sequence is Kelch domain-containing protein 4 (584 aa).

The segment covering 1–10 (MGKKGKKEKK) has biased composition (basic residues). Disordered regions lie at residues 1–33 (MGKK…RKEE) and 50–69 (KTQV…NASL). Residues 11-24 (GRGAEKTAAKMEKK) show a composition bias toward basic and acidic residues. Kelch repeat units follow at residues 77-129 (ELIL…VVPQ), 133-187 (QLWV…AWKR), 188-238 (QLIL…LMAV), 243-289 (SIAI…INPS), and 308-361 (QILV…RRGK). Disordered stretches follow at residues 348 to 381 (KGPK…APEP), 405 to 433 (SGLG…CPRS), and 482 to 533 (PKSQ…EQFE). Serine 418 carries the post-translational modification Phosphoserine. The Kelch 6 repeat unit spans residues 443–494 (LLYVYGGMFEAGDRQVTLSDLYCLDLHKMEEWKTLVEMDPKSQEWLEESDSE). Residues 487-519 (WLEESDSEEDSSSDEESEDGEDKDQEDSAEEGA) are compositionally biased toward acidic residues. Over residues 520–533 (DPQHPEVARGEQFE) the composition is skewed to basic and acidic residues.

The chain is Kelch domain-containing protein 4 (Klhdc4) from Mus musculus (Mouse).